The sequence spans 144 residues: Glutaredoxin-C6 (144 aa).

The 105-residue stretch at 39–143 (EAKIRRLISE…PKLVQVGALW (105 aa)) folds into the Glutaredoxin domain. A disulfide bond links Cys59 and Cys62.

This sequence belongs to the glutaredoxin family. CC-type subfamily.

Its subcellular location is the cytoplasm. Functionally, has a glutathione-disulfide oxidoreductase activity in the presence of NADPH and glutathione reductase. Reduces low molecular weight disulfides and proteins. This Arabidopsis thaliana (Mouse-ear cress) protein is Glutaredoxin-C6 (GRXC6).